We begin with the raw amino-acid sequence, 1055 residues long: MEDDAPKHIIQMTGFKVEEKEALGKLLLKLDCTFIKSEKYKNCTHLIAERLCKSEKFLAACAAGKWVLTKDYIIHSAQSGRWLDETTYEWGYKIEKDSHYSPQMQSAPKRWREELKRTGAPGAFHKWKVVLLVRADKRSDSLVRVLEAGKANVILPKNSPTGITHVIASNARIKAEQEKDDFKAPFYPIQYLEDFLLEKEIHNDEDSQTNSTWKNHSSQEKSNDFRENMGFLEMKGTLKETMCRTQKEMKNHDEDVTISSILTEHQSKERFRDSRKNLKFVKMRNALGRHTYRNQEMKKKDEDIQSIYTLRKKRKKEKERDSRKDIEHDRSTLRKHIYRDQKERKNSVFAGHAKESKTKDIRTNVDIVDLKNALRKHIYRAQAVRYRGIRIDKQPAYNVEVKNAEFPRGILNLIESLIEGQFFKEAIEELSSLQAHYIPPVYLLHALLENILQDNIDTFSGRYFHILSALLHLHPPWKSPAMSTYYLELFQCPTCMKGTWSLIEVLIRSCLFNESFCHQISENIIGSKVLHLTLLKFFFNLIESEVRHLSQKLYDWSDSQSLKITGKAVLLEIFWSGNETSGLLTKPVNMLLEWTIYSHKEKCKSNDVFRHELAYLLTGILGAAIDYWIVLGLNMGRNVMRHMSDDVGSYVSLSCDDFSSQDLEIFISSFSSSWLQMFVAEAVFKKLCLQNSISISSEPLSLQKMVYSYLPALGKTGVRGTRKMQKPKKIGLRPCFESQRALIMLNGAKQKQGEGLPEIPELNLAKCSSSLKRLKKKSEGELSCSKENCPSLVTKINFHKTNLKGETALHRACINNQVDRLILLLSMPGIDINVKDNAGWTPLHEACNYGNTVCVQEILQRCPEVDLLTQVDGVTPLHDALSNGHVEIGKLLLQHGGPVLLQQRNSKGELPLDYVVSSQIKEELFAITKIEDTVENFHAQAEKHFYHQQLEFGSFLLSRMLLNFCSIFGLSSESLAFKGLTHLSELLIACQNYKETTSVHTDWLLDLYARNIMTLQKLPNALKELPENVKVCPGVHTEALLVTLEVMCRSVTEIS.

BRCT domains are found at residues 2–80 and 121–199; these read EDDA…AQSG and PGAF…LLEK. The disordered stretch occupies residues 312 to 332; that stretch reads KKRKKEKERDSRKDIEHDRST. The span at 318–332 shows a compositional bias: basic and acidic residues; the sequence is KERDSRKDIEHDRST. The tract at residues 407 to 1055 is NSE5-like domain; mediates interaction with SLF2; it reads PRGILNLIES…VMCRSVTEIS (649 aa). ANK repeat units lie at residues 804 to 834, 838 to 867, and 872 to 901; these read KGET…DINV, AGWT…EVDL, and DGVT…PVLL. Lysine 929 is covalently cross-linked (Glycyl lysine isopeptide (Lys-Gly) (interchain with G-Cter in SUMO2)).

In terms of assembly, interacts (via N-terminus) with SLF2; this interaction links RAD18 to the SMC5-SMC6 complex. Interacts (via BRCT domains) with RAD18; this interaction occurs in a SLF2-independent manner. Interacts with SMC6. Interacts (via BRCT domains) with RAD18 (via C-terminus and phosphorylated form); this interaction is required for efficient repair of UV-induced DNA damage.

It localises to the nucleus. The protein resides in the cytoplasm. It is found in the cytoskeleton. The protein localises to the microtubule organizing center. Its subcellular location is the centrosome. Its function is as follows. Plays a role in the DNA damage response (DDR) pathway by regulating postreplication repair of UV-damaged DNA and genomic stability maintenance. The SLF1-SLF2 complex acts to link RAD18 with the SMC5-SMC6 complex at replication-coupled interstrand cross-links (ICL) and DNA double-strand breaks (DSBs) sites on chromatin during DNA repair in response to stalled replication forks. Promotes the recruitment of SLF2 and the SMC5-SMC6 complex to DNA lesions. The sequence is that of SMC5-SMC6 complex localization factor protein 1 from Bos taurus (Bovine).